Here is a 678-residue protein sequence, read N- to C-terminus: Protein distal antenna (678 aa).

An HTH psq-type domain is found at Thr7 to Leu58. Residues Lys34 to Asn54 constitute a DNA-binding region (H-T-H motif). Disordered regions lie at residues Gly232 to Met310, Gly344 to Ser381, Lys445 to Cys528, Gly541 to Glu592, and Asn645 to Lys678. Composition is skewed to polar residues over residues Pro241–Ser254 and Pro349–Gln363. 2 positions are modified to phosphoserine: Ser251 and Ser254. Residues Leu372–Ser381 are compositionally biased toward low complexity. Residues Thr449–Asn461 show a composition bias toward polar residues. The span at Pro462–Pro478 shows a compositional bias: acidic residues. Over residues Thr495 to Arg508 the composition is skewed to polar residues. A compositionally biased stretch (low complexity) spans Asn570 to Asn586. Residues Glu657 to Glu667 show a composition bias toward acidic residues.

Homomers. Interacts with itself, danr, ey and dac to form a complex (or complexes) containing the RD factors. In terms of tissue distribution, coexpressed with danr in the presumptive distal antenna, but not in the leg imaginal disk. Both proteins are also expressed in the brain and the eye region of the eye-antenna disk. First detected in early L3 eye disks in cells surrounding the newly initiated MF. Levels are uniform and high anterior to the furrow, lower levels within and posterior to the furrow. Limited expression is seen in small groups of cells in leg and wing. These appear in the location of prominent sense organ progenitors at relatively late stages of disk development.

The protein localises to the nucleus. Its function is as follows. Probable transcription factor with a role in the retinal determination (RD) network. Regulates ato expression and is required for normal R8 induction and differentiation. Danr appears to repress Dan expression, but Dan is required for Danr expression anterior to the morphogenetic furrow (MF). Dan and Danr lie downstream of so and require dac function for highest levels of expression. Contributes to differentiation of antenna-specific characteristics; effector gene that acts downstream of homothorax (hth), Distal-less (Dll), cut (ct) and spineless (ss) genes to control differentiation of distal antennal structures. This is Protein distal antenna from Drosophila melanogaster (Fruit fly).